The chain runs to 231 residues: Large ribosomal subunit protein uL1 (231 aa).

This sequence belongs to the universal ribosomal protein uL1 family. In terms of assembly, part of the 50S ribosomal subunit.

Binds directly to 23S rRNA. The L1 stalk is quite mobile in the ribosome, and is involved in E site tRNA release. Its function is as follows. Protein L1 is also a translational repressor protein, it controls the translation of the L11 operon by binding to its mRNA. The chain is Large ribosomal subunit protein uL1 from Pseudomonas putida (strain ATCC 700007 / DSM 6899 / JCM 31910 / BCRC 17059 / LMG 24140 / F1).